Here is a 140-residue protein sequence, read N- to C-terminus: Probable glycine cleavage system H protein (140 aa).

Residues 22-114 (RAIIGITSYA…YEEGWIVVLE (93 aa)) form the Lipoyl-binding domain. Lysine 63 carries the N6-lipoyllysine modification.

Belongs to the GcvH family. The glycine cleavage system is composed of four proteins: P, T, L and H. The cofactor is (R)-lipoate.

In terms of biological role, the glycine cleavage system catalyzes the degradation of glycine. The H protein shuttles the methylamine group of glycine from the P protein to the T protein. The protein is Probable glycine cleavage system H protein of Korarchaeum cryptofilum (strain OPF8).